The chain runs to 153 residues: Endoribonuclease YbeY (153 aa).

Zn(2+)-binding residues include His-116, His-120, and His-126.

Belongs to the endoribonuclease YbeY family. Requires Zn(2+) as cofactor.

The protein localises to the cytoplasm. In terms of biological role, single strand-specific metallo-endoribonuclease involved in late-stage 70S ribosome quality control and in maturation of the 3' terminus of the 16S rRNA. This is Endoribonuclease YbeY from Clavibacter michiganensis subsp. michiganensis (strain NCPPB 382).